Reading from the N-terminus, the 199-residue chain is Peroxynitrite isomerase (199 aa).

The GXWXGXG signature appears at 20-26 (GVWEGTG). H190 is a binding site for heme b.

This sequence belongs to the nitrobindin family. As to quaternary structure, homodimer. Heme b serves as cofactor.

It catalyses the reaction peroxynitrite = nitrate. It participates in nitrogen metabolism. Its function is as follows. Heme-binding protein able to scavenge peroxynitrite and to protect free L-tyrosine against peroxynitrite-mediated nitration, by acting as a peroxynitrite isomerase that converts peroxynitrite to nitrate. Therefore, this protein likely plays a role in peroxynitrite sensing and in the detoxification of reactive nitrogen and oxygen species (RNS and ROS, respectively). Is able to bind nitric oxide (NO) in vitro, but may act as a sensor of peroxynitrite levels in vivo. The chain is Peroxynitrite isomerase from Clavibacter michiganensis subsp. michiganensis (strain NCPPB 382).